The chain runs to 228 residues: Small ribosomal subunit protein uS3 (228 aa).

In terms of domain architecture, KH type-2 spans 39–107; it reads VREFIRERLK…PVHINIEEIR (69 aa).

It belongs to the universal ribosomal protein uS3 family. As to quaternary structure, part of the 30S ribosomal subunit. Forms a tight complex with proteins S10 and S14.

Functionally, binds the lower part of the 30S subunit head. Binds mRNA in the 70S ribosome, positioning it for translation. The chain is Small ribosomal subunit protein uS3 from Halorhodospira halophila (strain DSM 244 / SL1) (Ectothiorhodospira halophila (strain DSM 244 / SL1)).